A 196-amino-acid chain; its full sequence is MDLIARVAKNFEDSAQTKLNAVDMMAAPIAAAIETMTNCLINGGKILACGNGGSAGDSQHFAAELIGRFEAERQELAAIALTTDSSILTAIGNDYSFNQIFSKQVRGLGHSGDILLAISTSGNSGNIIEAIKAAHEHDMHVIALTGKGGGQIGEMLRDADIHLCVPADRTARIQETHLLVIHCLCDGIDALLLGVE.

The SIS domain maps to 36–196 (MTNCLINGGK…GIDALLLGVE (161 aa)). 51–53 (NGG) is a binding site for substrate. Zn(2+)-binding residues include His-60 and Glu-64. Substrate is bound by residues Glu-64, 93 to 94 (ND), 119 to 121 (STS), Ser-124, and Gln-174. Zn(2+)-binding residues include Gln-174 and His-182.

This sequence belongs to the SIS family. GmhA subfamily. In terms of assembly, homotetramer. Zn(2+) is required as a cofactor.

The protein localises to the cytoplasm. The catalysed reaction is 2 D-sedoheptulose 7-phosphate = D-glycero-alpha-D-manno-heptose 7-phosphate + D-glycero-beta-D-manno-heptose 7-phosphate. The protein operates within carbohydrate biosynthesis; D-glycero-D-manno-heptose 7-phosphate biosynthesis; D-glycero-alpha-D-manno-heptose 7-phosphate and D-glycero-beta-D-manno-heptose 7-phosphate from sedoheptulose 7-phosphate: step 1/1. Catalyzes the isomerization of sedoheptulose 7-phosphate in D-glycero-D-manno-heptose 7-phosphate. In Dechloromonas aromatica (strain RCB), this protein is Phosphoheptose isomerase.